Reading from the N-terminus, the 1368-residue chain is Kinesin-like protein KIF24 (1368 aa).

Positions 1 to 64 constitute an SAM domain; sequence MASWLYECLC…FQLIKIIKIM (64 aa). The interval 89 to 112 is disordered; it reads ELRSGPRRQLNFDSPADNKDRNAS. Phosphoserine is present on residues Ser102 and Ser112. The 324-residue stretch at 223-546 folds into the Kinesin motor domain; sequence KIRVCVRKRP…LRYADRVKEL (324 aa). 313–320 is an ATP binding site; sequence GQTGAGKT. Ser478 carries the post-translational modification Phosphoserine. Positions 478 to 709 are interaction with MPHOSPH9; the sequence is SLLALKECIR…STKCKKVQTV (232 aa). The segment covering 557 to 576 has biased composition (polar residues); it reads TSRNRTSGNSSPKRIQSSPG. Disordered regions lie at residues 557–584 and 602–639; these read TSRN…DKCS and GSTR…SPSQ. Ser584 carries the phosphoserine modification. At Thr621 the chain carries Phosphothreonine; by NEK2. Residue Ser622 is modified to Phosphoserine; by NEK2. Residue Ser646 is modified to Phosphoserine. Disordered regions lie at residues 651 to 670, 729 to 753, 792 to 849, 864 to 938, and 952 to 984; these read TVRS…PLCS, HRAE…WTNI, QYRP…NTLE, GPEK…LAEK, and RGGG…EEDG. A compositionally biased stretch (acidic residues) spans 819 to 830; that stretch reads QVEELDDSDFSE. A phosphoserine mark is found at Ser826 and Ser829. Polar residues-rich tracts occupy residues 839–849 and 871–881; these read QRATKQRNTLE and ERQQSLFSSPR. The segment covering 882–906 has biased composition (basic and acidic residues); sequence TGDKKDLTKSWVDSRDPINHRRAAL. Ser1012 is subject to Phosphoserine. Disordered stretches follow at residues 1054–1073 and 1086–1148; these read MSLL…QLVQ and GGPV…SREA. Positions 1106-1119 are enriched in polar residues; the sequence is SSATRHLWLSSSPP. Residues 1138–1148 are compositionally biased toward basic and acidic residues; the sequence is HPADKLPSREA.

It belongs to the TRAFAC class myosin-kinesin ATPase superfamily. Kinesin family. Interacts with CCP110, CEP97, TALPID3. Interacts with MPHOSPH9.

The protein resides in the cytoplasm. The protein localises to the cytoskeleton. It is found in the microtubule organizing center. It localises to the centrosome. Its subcellular location is the centriole. In terms of biological role, microtubule-dependent motor protein that acts as a negative regulator of ciliogenesis by mediating recruitment of CCP110 to mother centriole in cycling cells, leading to restrict nucleation of cilia at centrioles. Mediates depolymerization of microtubules of centriolar origin, possibly to suppress aberrant cilia formation. Following activation by NEK2 involved in disassembly of primary cilium during G2/M phase but does not disassemble fully formed ciliary axonemes. As cilium assembly and disassembly is proposed to coexist in a dynamic equilibrium may suppress nascent cilium assembly and, potentially, ciliar re-assembly in cells that have already disassembled their cilia ensuring the completion of cilium removal in the later stages of the cell cycle. Plays an important role in recruiting MPHOSPH9, a negative regulator of cilia formation to the distal end of mother centriole. The protein is Kinesin-like protein KIF24 (KIF24) of Homo sapiens (Human).